A 285-amino-acid polypeptide reads, in one-letter code: MMAVDIEYRYNCMAPSLRQERFAFKISPKPSKPLRPCIQLSSKNEASGMVAPAVQEKKVKKRVSFADNQGLALTMVKVFSEFDDPLDMPFNITELLDNIVSLTTAESESFVLDFSQPSADYLDFRNRLQADHVCLENCVLKDKAIAGTVKVQNLAFEKTVKIRMTFDTWKSYTDFPCQYVKDTYAGSDRDTFSFDISLPEKIQSYERMEFAVYYECNGQTYWDSNRGKNYRIIRAELKSTQGMTKPHSGPDLGISFDQFGSPRCSYGLFPEWPSYLGYEKLGPYY.

The PP1-binding motif motif lies at 62-65 (RVSF). The CBM21 domain occupies 125–233 (RNRLQADHVC…SNRGKNYRII (109 aa)). Position 261 is a phosphoserine (Ser261).

In terms of assembly, interacts with glycogen, PPP1CC catalytic subunit of PP1 and PYGL. Associates with glycogen particles. Forms complexes with debranching enzyme, glycogen phosphorylase, glycogen synthase and phosphorylase kinase which is necessary for its regulation of PP1 activity. As to expression, highly expressed in the liver and, at lower levels, in skeletal muscle, including in vastus lateralis, gastrocnemius and soleus (at protein level). Highest mRNA levels are observed in skeletal muscle, and only moderate levels in liver and heart. Weak expression in placenta and lung.

Its function is as follows. Acts as a glycogen-targeting subunit for phosphatase PP1. Facilitates interaction of the PP1 with enzymes of the glycogen metabolism and regulates its activity. Suppresses the rate at which PP1 dephosphorylates (inactivates) glycogen phosphorylase and enhances the rate at which it activates glycogen synthase and therefore limits glycogen breakdown. Its activity is inhibited by PYGL, resulting in inhibition of the glycogen synthase and glycogen phosphorylase phosphatase activities of PP1. Dramatically increases basal and insulin-stimulated glycogen synthesis upon overexpression in hepatocytes. The polypeptide is Protein phosphatase 1 regulatory subunit 3B (PPP1R3B) (Homo sapiens (Human)).